A 361-amino-acid chain; its full sequence is MMHLLRRGAFAILLIVLLPSAALADLRLASWNIQHLGWNVGKDYPAVARIAAQFDFLAIQEVMNAEGIYRLRDTLEDATGAEWSVLYSDALGRNTYREKYAFLWREAAVEYVGGALTYIDEADRFAREPFSAVFRSRGTDQHFLAATVHITYGDRVADRVEEIEALRRYWDWLADVMPEYAGERILFGDFNLPPHHDGWASMRAVAEPLVTEGATTLSTHDRRYANLYDNLWVPKDHTLPLGDAGILPFPVVLSEVTGVYWDHEKARDRVSDHAPVYVLFEGNTLHDAVVAEIADQEAGCIDLNRASVSELTALPHIGEARAEAIKDGRPWNAVRDLKEIRGIGAGRLEEIKARGEACIEP.

A signal peptide spans 1-24; sequence MMHLLRRGAFAILLIVLLPSAALA. The active site involves His149.

Belongs to the DNase I family. It depends on Mg(2+) as a cofactor. Ca(2+) is required as a cofactor.

Its subcellular location is the secreted. Its function is as follows. DNA nuclease able to digest short and long DNA substrate. Is resistant to ionic strength and thus active at high salt concentration. The protein is Deoxyribonuclease of Thioalkalivibrio sp. (strain K90mix).